Here is a 1003-residue protein sequence, read N- to C-terminus: Alpha-1,4 glucan phosphorylase L isozyme, chloroplastic/amyloplastic (1003 aa).

The transit peptide at 1-64 directs the protein to the chloroplast; sequence MASMTMRFHP…RRRSAFSVKC (64 aa). Disordered stretches follow at residues 71-91 and 526-593; these read KQKV…SSFA and SSEE…KKLP. Positions 537-553 are enriched in acidic residues; that stretch reads GEEEETSKEGGEEEEEK. The segment covering 569–580 has biased composition (basic and acidic residues); the sequence is EVEKAIAEKDGT. An N6-(pyridoxal phosphate)lysine modification is found at K849.

The protein belongs to the glycogen phosphorylase family. Pyridoxal 5'-phosphate serves as cofactor. Found predominantly in cotyledons and early seed coat.

It localises to the plastid. It is found in the chloroplast. The protein resides in the amyloplast. The catalysed reaction is [(1-&gt;4)-alpha-D-glucosyl](n) + phosphate = [(1-&gt;4)-alpha-D-glucosyl](n-1) + alpha-D-glucose 1-phosphate. Its function is as follows. Phosphorylase is an important allosteric enzyme in carbohydrate metabolism. Enzymes from different sources differ in their regulatory mechanisms and in their natural substrates. However, all known phosphorylases share catalytic and structural properties. The L isoform exhibits higher affinity for unbranched substrates such as glucan-like amylose and maltodextrin. This is Alpha-1,4 glucan phosphorylase L isozyme, chloroplastic/amyloplastic (PHO1) from Vicia faba (Broad bean).